Here is a 122-residue protein sequence, read N- to C-terminus: MLKEFKNFILRGNVLDLAVGVIIGAAFTALVKSLVDNLINPLIGMFVQSTALAHLSVTVGKTKFTYGAFLNDVINFIITAFVIFILIKFINKLFPKKEETVEEQKNEELETLQEIRDLLKKQ.

The next 2 membrane-spanning stretches (helical) occupy residues 14–34 (VLDL…VKSL) and 67–87 (GAFL…FILI).

This sequence belongs to the MscL family. Homopentamer.

It is found in the cell membrane. Functionally, channel that opens in response to stretch forces in the membrane lipid bilayer. May participate in the regulation of osmotic pressure changes within the cell. The protein is Large-conductance mechanosensitive channel of Lactococcus lactis subsp. lactis (strain IL1403) (Streptococcus lactis).